Consider the following 142-residue polypeptide: Large ribosomal subunit protein uL13 (142 aa).

It belongs to the universal ribosomal protein uL13 family. In terms of assembly, part of the 50S ribosomal subunit.

Its function is as follows. This protein is one of the early assembly proteins of the 50S ribosomal subunit, although it is not seen to bind rRNA by itself. It is important during the early stages of 50S assembly. The chain is Large ribosomal subunit protein uL13 from Dictyoglomus thermophilum (strain ATCC 35947 / DSM 3960 / H-6-12).